The sequence spans 606 residues: Probable methyltransferase PMT5 (606 aa).

The Cytoplasmic segment spans residues methionine 1–arginine 20. A helical; Signal-anchor for type II membrane protein transmembrane segment spans residues glycine 21–serine 41. The Lumenal portion of the chain corresponds to asparagine 42–lysine 606. 2 N-linked (GlcNAc...) asparagine glycosylation sites follow: asparagine 101 and asparagine 409.

It belongs to the methyltransferase superfamily.

It is found in the endoplasmic reticulum membrane. This is Probable methyltransferase PMT5 from Arabidopsis thaliana (Mouse-ear cress).